The primary structure comprises 344 residues: Dihydroorotase (344 aa).

2 residues coordinate Zn(2+): H13 and H15. Substrate is bound by residues 15–17 and N41; that span reads HLR. Residues K98, H135, and H173 each contribute to the Zn(2+) site. K98 is subject to N6-carboxylysine. H135 serves as a coordination point for substrate. Residue L218 coordinates substrate. Position 247 (D247) interacts with Zn(2+). D247 is an active-site residue. Residues H251 and A263 each coordinate substrate.

This sequence belongs to the metallo-dependent hydrolases superfamily. DHOase family. Class II DHOase subfamily. In terms of assembly, homodimer. Zn(2+) is required as a cofactor.

It carries out the reaction (S)-dihydroorotate + H2O = N-carbamoyl-L-aspartate + H(+). It participates in pyrimidine metabolism; UMP biosynthesis via de novo pathway; (S)-dihydroorotate from bicarbonate: step 3/3. Catalyzes the reversible cyclization of carbamoyl aspartate to dihydroorotate. This Neisseria meningitidis serogroup B (strain ATCC BAA-335 / MC58) protein is Dihydroorotase.